The chain runs to 206 residues: Large ribosomal subunit protein mL62 (206 aa).

Residues M1–A29 constitute a mitochondrion transit peptide. Q90 carries the N5-methylglutamine modification.

This sequence belongs to the prokaryotic/mitochondrial release factor family. Mitochondrion-specific ribosomal protein mL62 subfamily. In terms of assembly, component of the mitochondrial ribosome large subunit (39S) which comprises a 16S rRNA and about 50 distinct proteins. Post-translationally, methylation of glutamine in the GGQ triplet by HEMK1.

It localises to the mitochondrion. It carries out the reaction an N-acyl-L-alpha-aminoacyl-tRNA + H2O = an N-acyl-L-amino acid + a tRNA + H(+). Functionally, essential peptidyl-tRNA hydrolase component of the mitochondrial large ribosomal subunit. Acts as a codon-independent translation release factor that has lost all stop codon specificity and directs the termination of translation in mitochondrion, possibly in case of abortive elongation. May be involved in the hydrolysis of peptidyl-tRNAs that have been prematurely terminated and thus in the recycling of stalled mitochondrial ribosomes. This chain is Large ribosomal subunit protein mL62, found in Bos taurus (Bovine).